The chain runs to 276 residues: NADPH-dependent 7-cyano-7-deazaguanine reductase (276 aa).

80 to 82 serves as a coordination point for substrate; it reads VES. An NADPH-binding site is contributed by 82–83; the sequence is SK. Cysteine 183 functions as the Thioimide intermediate in the catalytic mechanism. The active-site Proton donor is the aspartate 190. 222-223 is a binding site for substrate; sequence HE. 251-252 is a binding site for NADPH; sequence RG.

The protein belongs to the GTP cyclohydrolase I family. QueF type 2 subfamily. As to quaternary structure, homodimer.

The protein localises to the cytoplasm. The catalysed reaction is 7-aminomethyl-7-carbaguanine + 2 NADP(+) = 7-cyano-7-deazaguanine + 2 NADPH + 3 H(+). It functions in the pathway tRNA modification; tRNA-queuosine biosynthesis. Functionally, catalyzes the NADPH-dependent reduction of 7-cyano-7-deazaguanine (preQ0) to 7-aminomethyl-7-deazaguanine (preQ1). The polypeptide is NADPH-dependent 7-cyano-7-deazaguanine reductase (Burkholderia orbicola (strain MC0-3)).